The chain runs to 626 residues: Serine/threonine-protein kinase PknB (626 aa).

Residues 1–332 (MTTPSHLSDR…DRSIGSVGRW (332 aa)) are Cytoplasmic-facing. Residues 11–274 (YELGEILGFG…TAAEMRADLV (264 aa)) enclose the Protein kinase domain. ATP-binding positions include 17 to 25 (LGFGGMSEV), Lys40, and 93 to 95 (EYV). Asp138 serves as the catalytic Proton acceptor. ATP contacts are provided by residues 140-143 (KPAN) and Asp156. Mg(2+)-binding residues include Asn143 and Asp156. Phosphoserine; by autocatalysis is present on residues Ser166 and Ser169. Phosphothreonine; by autocatalysis occurs at positions 171, 173, and 294. Ser295 carries the phosphoserine; by autocatalysis modification. The disordered stretch occupies residues 299–323 (SAAGNLSGPRTDPLPRQDLDDTDRD). Thr309 is modified (phosphothreonine; by autocatalysis). A compositionally biased stretch (basic and acidic residues) spans 311-323 (PLPRQDLDDTDRD). A helical transmembrane segment spans residues 333–353 (VAVVAVLAVLTVVVTIAINTF). At 354–626 (GGITRDVQVP…DGIITLRFGQ (273 aa)) the chain is on the extracellular side. 4 PASTA domains span residues 356-422 (ITRD…NVST), 423-490 (GPEQ…IVGS), 491-557 (GPAT…QVSK), and 558-626 (GNQF…RFGQ).

This sequence belongs to the protein kinase superfamily. Ser/Thr protein kinase family. As to quaternary structure, homodimer. In terms of processing, autophosphorylated. Dephosphorylated by PstP.

The protein resides in the cell membrane. The enzyme catalyses L-seryl-[protein] + ATP = O-phospho-L-seryl-[protein] + ADP + H(+). The catalysed reaction is L-threonyl-[protein] + ATP = O-phospho-L-threonyl-[protein] + ADP + H(+). In terms of biological role, protein kinase that regulates many aspects of mycobacterial physiology. Is a key component of a signal transduction pathway that regulates cell growth, cell shape and cell division via phosphorylation of target proteins. This is Serine/threonine-protein kinase PknB (pknB) from Mycobacterium bovis (strain ATCC BAA-935 / AF2122/97).